The sequence spans 851 residues: Phosphatidylinositol 4-kinase pik1 (851 aa).

Residues M1 to I123 enclose the PIK helical domain. S202, S219, S222, and S235 each carry phosphoserine. Position 236 is a phosphotyrosine (Y236). The tract at residues L384–M404 is disordered. Acidic residues predominate over residues T388–G399. The region spanning Y558–W836 is the PI3K/PI4K catalytic domain. Residues I564–Y570 are G-loop. Positions Q706–N714 are catalytic loop. The segment at H725–T749 is activation loop.

The protein belongs to the PI3/PI4-kinase family. Interacts with cdc4 and cam2.

It localises to the golgi apparatus. The protein resides in the nucleus. The catalysed reaction is a 1,2-diacyl-sn-glycero-3-phospho-(1D-myo-inositol) + ATP = a 1,2-diacyl-sn-glycero-3-phospho-(1D-myo-inositol 4-phosphate) + ADP + H(+). Acts on phosphatidylinositol (PI) in the first committed step in the production of the second messenger inositol 1,4,5,-trisphosphate. PIK1 is part of a nuclear phosphoinositide cycle and could control cytokinesis through the actin cytoskeleton. The polypeptide is Phosphatidylinositol 4-kinase pik1 (pik1) (Schizosaccharomyces pombe (strain 972 / ATCC 24843) (Fission yeast)).